The following is a 441-amino-acid chain: Methylenetetrahydrofolate--tRNA-(uracil-5-)-methyltransferase TrmFO (441 aa).

Residue 11–16 (GGGLAG) participates in FAD binding.

The protein belongs to the MnmG family. TrmFO subfamily. FAD serves as cofactor.

It is found in the cytoplasm. It catalyses the reaction uridine(54) in tRNA + (6R)-5,10-methylene-5,6,7,8-tetrahydrofolate + NADH + H(+) = 5-methyluridine(54) in tRNA + (6S)-5,6,7,8-tetrahydrofolate + NAD(+). It carries out the reaction uridine(54) in tRNA + (6R)-5,10-methylene-5,6,7,8-tetrahydrofolate + NADPH + H(+) = 5-methyluridine(54) in tRNA + (6S)-5,6,7,8-tetrahydrofolate + NADP(+). Its function is as follows. Catalyzes the folate-dependent formation of 5-methyl-uridine at position 54 (M-5-U54) in all tRNAs. This Syntrophus aciditrophicus (strain SB) protein is Methylenetetrahydrofolate--tRNA-(uracil-5-)-methyltransferase TrmFO.